The primary structure comprises 332 residues: Torsin-1A (332 aa).

Positions 1–20 are cleaved as a signal peptide; it reads MKLGRAVLGLLLLAPSVVQA. An interaction with SNAPIN region spans residues 91-251; that stretch reads KPKKPLTLSL…VSVFNNKNSG (161 aa). Position 102-109 (102-109) interacts with ATP; the sequence is GWTGTGKN. N-linked (GlcNAc...) (high mannose) asparagine glycans are attached at residues asparagine 143 and asparagine 158. Residues 251–332 form an interaction with KLC1 region; it reads GFWHSSLIDR…FTKLDYYYDD (82 aa). The tract at residues 312-332 is interaction with SYNE3; it reads RVFSDKGCKTVFTKLDYYYDD.

Belongs to the ClpA/ClpB family. Torsin subfamily. As to quaternary structure, homohexamer. Interacts with TOR1B; the interaction may be specific of neural tissues. Interacts (ATP-bound) with TOR1AIP1 and TOR1AIP2; the interactions induce ATPase activity. Interacts with KLHL14; preferentially when ATP-free. Interacts with KLC1 (via TPR repeats); the interaction associates TOR1A with the kinesin oligomeric complex. Interacts with COPS4; the interaction associates TOR1A with the CSN complex. Interacts with SNAPIN; the interaction is direct and associates SNAPIN with the CSN complex. Interacts with STON2. Interacts (ATP-bound) with SYNE3 (via KASH domain); the interaction is required for SYNE3 nuclear envelope localization. Interacts with VIM; the interaction associates TOR1A with the cytoskeleton. Interacts with PLEC. Interacts (ATP-bound) with SLC6A3; regulates SLC6A3 transport to the plasma membrane. Post-translationally, N-glycosylated. Widely expressed. Highest levels in kidney and liver. In the brain, high levels found in the dopaminergic neurons of the substantia nigra pars compacta, as well as in the neocortex, hippocampus and cerebellum. Also highly expressed in the spinal cord.

It is found in the endoplasmic reticulum lumen. The protein resides in the nucleus membrane. The protein localises to the cell projection. Its subcellular location is the growth cone. It localises to the cytoplasmic vesicle membrane. It is found in the cytoplasmic vesicle. The protein resides in the secretory vesicle. The protein localises to the synaptic vesicle. Its subcellular location is the cytoplasm. It localises to the cytoskeleton. The enzyme catalyses ATP + H2O = ADP + phosphate + H(+). In terms of biological role, protein with chaperone functions important for the control of protein folding, processing, stability and localization as well as for the reduction of misfolded protein aggregates. Involved in the regulation of synaptic vesicle recycling, controls STON2 protein stability in collaboration with the COP9 signalosome complex (CSN). In the nucleus, may link the cytoskeleton with the nuclear envelope, this mechanism seems to be crucial for the control of nuclear polarity, cell movement and, specifically in neurons, nuclear envelope integrity. Participates in the cellular trafficking and may regulate the subcellular location of multipass membrane proteins such as the dopamine transporter SLC6A3, leading to the modulation of dopamine neurotransmission. In the endoplasmic reticulum, plays a role in the quality control of protein folding by increasing clearance of misfolded proteins such as SGCE variants or holding them in an intermediate state for proper refolding. May have a redundant function with TOR1B in non-neural tissues. The sequence is that of Torsin-1A (TOR1A) from Homo sapiens (Human).